The following is a 1104-amino-acid chain: Ankyrin repeat- and BTB/POZ domain-containing protein 3 (1104 aa).

A helical membrane pass occupies residues 168–188; that stretch reads IVLSWGLAAHCTAAALAALSL. Residues 260–301 are disordered; the sequence is SCSGPGSGSGSGPGPSSGPGAAPAADKEREAPGGGAASGGAC. A compositionally biased stretch (gly residues) spans 264-276; that stretch reads PGSGSGSGPGPSS. 5 ANK repeats span residues 603–632, 649–678, 687–716, 730–759, and 825–854; these read QGMT…DLNV, RHWT…KVEG, YSET…DPLI, GDMN…KEKS, and TWLE…TIQE. The 67-residue stretch at 923-989 folds into the BTB domain; that stretch reads SDVTFLVEGR…LYYGGPESLL (67 aa).

It localises to the membrane. This chain is Ankyrin repeat- and BTB/POZ domain-containing protein 3, found in Homo sapiens (Human).